Here is a 419-residue protein sequence, read N- to C-terminus: Serine hydroxymethyltransferase (419 aa).

(6S)-5,6,7,8-tetrahydrofolate is bound by residues L121 and 125 to 127 (GHL). K229 bears the N6-(pyridoxal phosphate)lysine mark.

The protein belongs to the SHMT family. In terms of assembly, homodimer. Pyridoxal 5'-phosphate serves as cofactor.

It is found in the cytoplasm. It carries out the reaction (6R)-5,10-methylene-5,6,7,8-tetrahydrofolate + glycine + H2O = (6S)-5,6,7,8-tetrahydrofolate + L-serine. The protein operates within one-carbon metabolism; tetrahydrofolate interconversion. Its pathway is amino-acid biosynthesis; glycine biosynthesis; glycine from L-serine: step 1/1. Its function is as follows. Catalyzes the reversible interconversion of serine and glycine with tetrahydrofolate (THF) serving as the one-carbon carrier. This reaction serves as the major source of one-carbon groups required for the biosynthesis of purines, thymidylate, methionine, and other important biomolecules. Also exhibits THF-independent aldolase activity toward beta-hydroxyamino acids, producing glycine and aldehydes, via a retro-aldol mechanism. The chain is Serine hydroxymethyltransferase from Streptomyces griseus subsp. griseus (strain JCM 4626 / CBS 651.72 / NBRC 13350 / KCC S-0626 / ISP 5235).